The sequence spans 175 residues: Movement protein (175 aa).

Positions 30–47 are homodimerization; the sequence is ADLDDDEEVTTGQEELFL. The segment at 50–156 is RNA-binding; it reads EQVRARHLFS…QRLTSTERNG (107 aa). Phosphoserine is present on residues Ser-64 and Ser-133. Composition is skewed to polar residues over residues 116 to 141 and 148 to 169; these read SLTS…SQSP and RLTS…SSTK. Positions 116–175 are disordered; that stretch reads SLTSWTHTVNSTPFPQLSTSSGSQSPGKGRLQRLTSTERNGTTLPRTNSGSSTKAMVLHR.

The protein belongs to the polerovirus movement protein family. Homodimer. Phosphorylated.

Its subcellular location is the host cell junction. The protein resides in the host plasmodesma. It is found in the host Golgi apparatus. Its function is as follows. Together with movement protein P3a, facilitates long-distance movement of virions in host. Transports viral genome to neighboring plant cells directly through plasmosdesmata, without any budding. The movement protein allows efficient cell to cell propagation, by bypassing the host cell wall barrier. Binds ssRNA. The chain is Movement protein from Turnip yellows virus (isolate FL-1) (TuYV).